The chain runs to 88 residues: uncharacterized protein (88 aa).

This is an uncharacterized protein from Gracula (BFDV).